The primary structure comprises 134 residues: Acyl carrier protein, chloroplastic (134 aa).

Residues 1 to 51 (MSTTFCSSVSMQATSLAATTRISFQKPALVSRTNLSFNLSRSIPTRLSVSC) constitute a chloroplast transit peptide. One can recognise a Carrier domain in the interval 55–130 (PETVEKVSKI…EAAELIDELV (76 aa)). Ser90 bears the O-(pantetheine 4'-phosphoryl)serine mark.

It belongs to the acyl carrier protein (ACP) family. 4'-phosphopantetheine is transferred from CoA to a specific serine of apo-ACP by acpS. This modification is essential for activity because fatty acids are bound in thioester linkage to the sulfhydryl of the prosthetic group. Seed.

It is found in the plastid. Its subcellular location is the chloroplast. Its pathway is lipid metabolism; fatty acid biosynthesis. Its function is as follows. Carrier of the growing fatty acid chain in fatty acid biosynthesis. The protein is Acyl carrier protein, chloroplastic (ACL1.A1) of Brassica napus (Rape).